The sequence spans 72 residues: ATP synthase subunit c (72 aa).

Transmembrane regions (helical) follow at residues 1–21 (MSLG…GAGI) and 49–69 (FIGV…AFIV).

It belongs to the ATPase C chain family. As to quaternary structure, F-type ATPases have 2 components, F(1) - the catalytic core - and F(0) - the membrane proton channel. F(1) has five subunits: alpha(3), beta(3), gamma(1), delta(1), epsilon(1). F(0) has three main subunits: a(1), b(2) and c(10-14). The alpha and beta chains form an alternating ring which encloses part of the gamma chain. F(1) is attached to F(0) by a central stalk formed by the gamma and epsilon chains, while a peripheral stalk is formed by the delta and b chains.

Its subcellular location is the cell membrane. F(1)F(0) ATP synthase produces ATP from ADP in the presence of a proton or sodium gradient. F-type ATPases consist of two structural domains, F(1) containing the extramembraneous catalytic core and F(0) containing the membrane proton channel, linked together by a central stalk and a peripheral stalk. During catalysis, ATP synthesis in the catalytic domain of F(1) is coupled via a rotary mechanism of the central stalk subunits to proton translocation. In terms of biological role, key component of the F(0) channel; it plays a direct role in translocation across the membrane. A homomeric c-ring of between 10-14 subunits forms the central stalk rotor element with the F(1) delta and epsilon subunits. The chain is ATP synthase subunit c from Bacillus cytotoxicus (strain DSM 22905 / CIP 110041 / 391-98 / NVH 391-98).